Consider the following 186-residue polypeptide: Archaemetzincin (186 aa).

H136 is a Zn(2+) binding site. Residue E137 is the Proton acceptor of the active site. Zn(2+)-binding residues include H140, H146, C147, C152, C171, and C174.

This sequence belongs to the peptidase M54 family. As to quaternary structure, monomer. Zn(2+) is required as a cofactor.

Its function is as follows. Probable zinc metalloprotease whose natural substrate is unknown. This chain is Archaemetzincin, found in Thermococcus kodakarensis (strain ATCC BAA-918 / JCM 12380 / KOD1) (Pyrococcus kodakaraensis (strain KOD1)).